Reading from the N-terminus, the 211-residue chain is Agamous-like MADS-box protein AGL12 (211 aa).

The MADS-box domain occupies 3–57 (RGKIQLKRIENPVHRQVTFCKRRTGLLKKAKELSVLCDAEIGVVIFSPQGKLFEL). The K-box domain maps to 95–185 (NLDPKDEINV…LEKIEENNNS (91 aa)).

In terms of tissue distribution, preferentially expressed in roots. In root meristem, expressed in external cells of columella, lateral root cap and atrichoblasts. In mature root, expressed in the central cylinder. Expressed in leaf vasculature, young floral meristems and nectaries.

The protein localises to the nucleus. Its function is as follows. Probable transcription activator that regulates root development by controlling cell proliferation in root meristem. May mediate responses to auxin in the root. May act as promoter of the flowering transition through up-regulation of SOC, FT and LFY. The protein is Agamous-like MADS-box protein AGL12 of Arabidopsis thaliana (Mouse-ear cress).